Consider the following 122-residue polypeptide: Small ribosomal subunit protein uS13 (122 aa).

A disordered region spans residues 98 to 122 (VRGQRTHTNARTRKGPAKAIAGKKK).

It belongs to the universal ribosomal protein uS13 family. As to quaternary structure, part of the 30S ribosomal subunit. Forms a loose heterodimer with protein S19. Forms two bridges to the 50S subunit in the 70S ribosome.

Located at the top of the head of the 30S subunit, it contacts several helices of the 16S rRNA. In the 70S ribosome it contacts the 23S rRNA (bridge B1a) and protein L5 of the 50S subunit (bridge B1b), connecting the 2 subunits; these bridges are implicated in subunit movement. Contacts the tRNAs in the A and P-sites. The sequence is that of Small ribosomal subunit protein uS13 from Ruegeria pomeroyi (strain ATCC 700808 / DSM 15171 / DSS-3) (Silicibacter pomeroyi).